A 178-amino-acid polypeptide reads, in one-letter code: Bryoporin (178 aa).

Residues Ser-51, Val-83, Ser-102, Pro-104, and Tyr-134 each contribute to the phosphocholine site. Residues 101–117 (WSVPFDYNLYSNWWNIA) are trp-rich region.

It belongs to the actinoporin family. Plant subfamily.

With respect to regulation, inhibited by sphingomyelin. In terms of biological role, actinoporin-related protein having hemolytic activity in vitro. Binds probably a phosphocholine derivative with the unique amido or hydroxyl groups found in sphingomyelin. Involved in drought tolerance. The sequence is that of Bryoporin from Physcomitrium patens (Spreading-leaved earth moss).